The following is a 245-amino-acid chain: Biosynthetic peptidoglycan transglycosylase (245 aa).

A helical transmembrane segment spans residues 20–42 (VYAGSVFAGAWLATQLFYLVQIA).

This sequence belongs to the glycosyltransferase 51 family.

It is found in the cell inner membrane. The catalysed reaction is [GlcNAc-(1-&gt;4)-Mur2Ac(oyl-L-Ala-gamma-D-Glu-L-Lys-D-Ala-D-Ala)](n)-di-trans,octa-cis-undecaprenyl diphosphate + beta-D-GlcNAc-(1-&gt;4)-Mur2Ac(oyl-L-Ala-gamma-D-Glu-L-Lys-D-Ala-D-Ala)-di-trans,octa-cis-undecaprenyl diphosphate = [GlcNAc-(1-&gt;4)-Mur2Ac(oyl-L-Ala-gamma-D-Glu-L-Lys-D-Ala-D-Ala)](n+1)-di-trans,octa-cis-undecaprenyl diphosphate + di-trans,octa-cis-undecaprenyl diphosphate + H(+). The protein operates within cell wall biogenesis; peptidoglycan biosynthesis. In terms of biological role, peptidoglycan polymerase that catalyzes glycan chain elongation from lipid-linked precursors. The polypeptide is Biosynthetic peptidoglycan transglycosylase (Burkholderia ambifaria (strain ATCC BAA-244 / DSM 16087 / CCUG 44356 / LMG 19182 / AMMD) (Burkholderia cepacia (strain AMMD))).